A 394-amino-acid chain; its full sequence is Elongation factor Tu (394 aa).

One can recognise a tr-type G domain in the interval 10–204; it reads KPHVNIGTIG…AVDEYIPTPD (195 aa). The G1 stretch occupies residues 19-26; sequence GHIDHGKT. 19 to 26 contributes to the GTP binding site; it reads GHIDHGKT. Thr26 contacts Mg(2+). The G2 stretch occupies residues 60 to 64; that stretch reads GITIN. Positions 81-84 are G3; the sequence is DCPG. GTP-binding positions include 81–85 and 136–139; these read DCPGH and NKCD. The G4 stretch occupies residues 136–139; the sequence is NKCD. The G5 stretch occupies residues 174 to 176; that stretch reads SAL.

Belongs to the TRAFAC class translation factor GTPase superfamily. Classic translation factor GTPase family. EF-Tu/EF-1A subfamily. Monomer.

It localises to the cytoplasm. The catalysed reaction is GTP + H2O = GDP + phosphate + H(+). Functionally, GTP hydrolase that promotes the GTP-dependent binding of aminoacyl-tRNA to the A-site of ribosomes during protein biosynthesis. The sequence is that of Elongation factor Tu from Mycoplasmoides gallisepticum (strain R(low / passage 15 / clone 2)) (Mycoplasma gallisepticum).